The sequence spans 558 residues: Potassium-transporting ATPase potassium-binding subunit (558 aa).

Helical transmembrane passes span 1 to 21 (MSIVLFLIVFILLSLIVSRYL), 60 to 80 (IKHFLLFNGLMGGLSFVLLLI), 129 to 149 (VITFLMFTSAASGYAVCIAML), 169 to 189 (FIVRVLIPFALIISLFLISQG), 246 to 266 (WSNYAEALSMMLIPGSLVFLF), 281 to 301 (IMIFVAMFVMFIGFLVTCLYF), 326 to 346 (FGIGLSALFTTITTAFTTGTV), 353 to 373 (LTPLGGMVPMVLMMLNAVFGG), 376 to 396 (VGLMNMLIYVMLTVFICSLMI), 415 to 435 (IALSFLVHPLLILVFSALAFI), 485 to 505 (IVMLLARYIPIVLQILIVSSL), and 523 to 543 (LFFSSVLIIFIILLSGLTFLP).

Belongs to the KdpA family. As to quaternary structure, the system is composed of three essential subunits: KdpA, KdpB and KdpC.

It localises to the cell membrane. Part of the high-affinity ATP-driven potassium transport (or Kdp) system, which catalyzes the hydrolysis of ATP coupled with the electrogenic transport of potassium into the cytoplasm. This subunit binds the extracellular potassium ions and delivers the ions to the membrane domain of KdpB through an intramembrane tunnel. In Staphylococcus haemolyticus (strain JCSC1435), this protein is Potassium-transporting ATPase potassium-binding subunit.